The sequence spans 100 residues: Small ribosomal subunit protein uS14c (100 aa).

This sequence belongs to the universal ribosomal protein uS14 family. In terms of assembly, part of the 30S ribosomal subunit.

The protein localises to the plastid. It is found in the chloroplast. Functionally, binds 16S rRNA, required for the assembly of 30S particles. This chain is Small ribosomal subunit protein uS14c, found in Gossypium barbadense (Sea Island cotton).